The primary structure comprises 134 residues: Fatty acid-binding protein 5 (134 aa).

The Nuclear localization signal motif lies at 23–33 (KELGVGMAMRK). Hexadecanoate is bound by residues R109 and 129–131 (RVY). The N-eicosanoyl ethanolamine site is built by R109 and Y131. Residue 129–131 (RVY) coordinates (9Z,12Z)-octadecadienoate.

It belongs to the calycin superfamily. Fatty-acid binding protein (FABP) family. In terms of assembly, monomer.

Its subcellular location is the cytoplasm. It localises to the nucleus. The protein localises to the synapse. It is found in the postsynaptic density. The protein resides in the secreted. The catalysed reaction is hexadecanoate(out) = hexadecanoate(in). The enzyme catalyses (9Z,12Z)-octadecadienoate(out) = (9Z,12Z)-octadecadienoate(in). It carries out the reaction (9Z)-octadecenoate(out) = (9Z)-octadecenoate(in). Intracellular carrier for long-chain fatty acids and related active lipids, such as endocannabinoids, that regulate the metabolism and actions of the ligands they bind. In addition to the cytosolic transport, selectively delivers specific fatty acids from the cytosol to the nucleus, wherein they activate nuclear receptors. Delivers retinoic acid to the nuclear receptor peroxisome proliferator-activated receptor delta; which promotes proliferation and survival. May also serve as a synaptic carrier of endocannabinoid at central synapses and thus controls retrograde endocannabinoid signaling. Modulates inflammation by regulating PTGES induction via NF-kappa-B activation, and prostaglandin E2 (PGE2) biosynthesis during inflammation. Has the highest binding affinity for docosahexaenoic acid (DHA) and decreasing relative affinity for eicosapentaenoic acid (EPA), alpha-linolenic acid (ALA), oleic acid, palmitic acid, linoleic acid and stearic acid, respectively. This chain is Fatty acid-binding protein 5, found in Pygoscelis papua (Gentoo penguin).